A 353-amino-acid chain; its full sequence is Photosystem II D2 protein (353 aa).

Thr2 is modified (N-acetylthreonine). Phosphothreonine is present on Thr2. A helical membrane pass occupies residues 41 to 61; that stretch reads CAYFALGGWFTGTTFVTSWYT. His118 contacts chlorophyll a. Residues 125–141 traverse the membrane as a helical segment; the sequence is GFMLRQFELARSVQLRP. The pheophytin a site is built by Gln130 and Asn143. A helical membrane pass occupies residues 153–166; the sequence is VFVSVFLIYPLGQS. Residue His198 coordinates chlorophyll a. The chain crosses the membrane as a helical span at residues 208–228; the sequence is AALLCAIHGATVENTLFEDGD. 2 residues coordinate a plastoquinone: His215 and Phe262. A Fe cation-binding site is contributed by His215. His269 serves as a coordination point for Fe cation. The chain crosses the membrane as a helical span at residues 279–295; that stretch reads GLWMSAIGVVGLALNLR.

This sequence belongs to the reaction center PufL/M/PsbA/D family. In terms of assembly, PSII is composed of 1 copy each of membrane proteins PsbA, PsbB, PsbC, PsbD, PsbE, PsbF, PsbH, PsbI, PsbJ, PsbK, PsbL, PsbM, PsbT, PsbX, PsbY, PsbZ, Psb30/Ycf12, at least 3 peripheral proteins of the oxygen-evolving complex and a large number of cofactors. It forms dimeric complexes. Requires The D1/D2 heterodimer binds P680, chlorophylls that are the primary electron donor of PSII, and subsequent electron acceptors. It shares a non-heme iron and each subunit binds pheophytin, quinone, additional chlorophylls, carotenoids and lipids. There is also a Cl(-1) ion associated with D1 and D2, which is required for oxygen evolution. The PSII complex binds additional chlorophylls, carotenoids and specific lipids. as cofactor.

The protein localises to the plastid. Its subcellular location is the chloroplast thylakoid membrane. It carries out the reaction 2 a plastoquinone + 4 hnu + 2 H2O = 2 a plastoquinol + O2. Functionally, photosystem II (PSII) is a light-driven water:plastoquinone oxidoreductase that uses light energy to abstract electrons from H(2)O, generating O(2) and a proton gradient subsequently used for ATP formation. It consists of a core antenna complex that captures photons, and an electron transfer chain that converts photonic excitation into a charge separation. The D1/D2 (PsbA/PsbD) reaction center heterodimer binds P680, the primary electron donor of PSII as well as several subsequent electron acceptors. D2 is needed for assembly of a stable PSII complex. The sequence is that of Photosystem II D2 protein from Phalaenopsis aphrodite subsp. formosana (Moth orchid).